Reading from the N-terminus, the 376-residue chain is Chaperone protein DnaJ (376 aa).

A J domain is found at 5-70; it reads DYYEVLGVAK…QKRAAYDQYG (66 aa). The CR-type zinc finger occupies 136–214; the sequence is GYDTQIRVPS…CHGSGKVKET (79 aa). Residues cysteine 149, cysteine 152, cysteine 166, cysteine 169, cysteine 188, cysteine 191, cysteine 202, and cysteine 205 each contribute to the Zn(2+) site. CXXCXGXG motif repeat units follow at residues 149-156, 166-173, 188-195, and 202-209; these read CGVCHGSG, CPTCHGQG, CPKCHGTG, and CVHCHGSG.

Belongs to the DnaJ family. Homodimer. Zn(2+) serves as cofactor.

It is found in the cytoplasm. Participates actively in the response to hyperosmotic and heat shock by preventing the aggregation of stress-denatured proteins and by disaggregating proteins, also in an autonomous, DnaK-independent fashion. Unfolded proteins bind initially to DnaJ; upon interaction with the DnaJ-bound protein, DnaK hydrolyzes its bound ATP, resulting in the formation of a stable complex. GrpE releases ADP from DnaK; ATP binding to DnaK triggers the release of the substrate protein, thus completing the reaction cycle. Several rounds of ATP-dependent interactions between DnaJ, DnaK and GrpE are required for fully efficient folding. Also involved, together with DnaK and GrpE, in the DNA replication of plasmids through activation of initiation proteins. In Burkholderia pseudomallei (strain 1710b), this protein is Chaperone protein DnaJ.